The following is a 280-amino-acid chain: 2-dehydro-3-deoxyphosphooctonate aldolase (280 aa).

Belongs to the KdsA family.

The protein localises to the cytoplasm. The enzyme catalyses D-arabinose 5-phosphate + phosphoenolpyruvate + H2O = 3-deoxy-alpha-D-manno-2-octulosonate-8-phosphate + phosphate. It participates in carbohydrate biosynthesis; 3-deoxy-D-manno-octulosonate biosynthesis; 3-deoxy-D-manno-octulosonate from D-ribulose 5-phosphate: step 2/3. Its pathway is bacterial outer membrane biogenesis; lipopolysaccharide biosynthesis. The polypeptide is 2-dehydro-3-deoxyphosphooctonate aldolase (Thiobacillus denitrificans (strain ATCC 25259 / T1)).